Reading from the N-terminus, the 386-residue chain is Latent membrane protein 1 (386 aa).

The Cytoplasmic segment spans residues 1–23; sequence MEHDLERGPPGPRRPPRGPPLSS. A helical transmembrane segment spans residues 24 to 44; that stretch reads SLGLALLLLLLALLFWLYIVM. Residues 45–51 are Extracellular-facing; that stretch reads SDWTGGA. A helical transmembrane segment spans residues 52–72; the sequence is LLVLYSFALMLIIIILIIFIF. Residues 73–75 are Cytoplasmic-facing; the sequence is RRD. The helical transmembrane segment at 76-96 threads the bilayer; it reads LLCPLGALCILLLMITLLLIA. Topologically, residues 97 to 106 are extracellular; sequence LWNLHGQALF. A helical membrane pass occupies residues 107-127; it reads LGIVLFIFGCLLVLGIWIYLL. At 128–139 the chain is on the cytoplasmic side; it reads EMLWRLGATIWQ. A helical membrane pass occupies residues 140-160; it reads LLAFFLAFFLDLILLIIALYL. The Extracellular portion of the chain corresponds to 161-163; that stretch reads QQN. Residues 164 to 184 form a helical membrane-spanning segment; that stretch reads WWTLLVDLLWLLLFLAILIWM. At 185–386 the chain is on the cytoplasmic side; the sequence is YYHGQRHSDE…HGPVQLSYYD (202 aa). The tract at residues 194-232 is CTAR1; it reads EHHHDDSLPHPQQATDDSGHESDSNSNEGRHHLLVSGAG. The segment at 194–386 is disordered; the sequence is EHHHDDSLPH…HGPVQLSYYD (193 aa). An Interaction with host TRAF proteins motif is present at residues 204-208; it reads PQQAT. Residues 210–224 show a composition bias toward basic and acidic residues; sequence DSGHESDSNSNEGRH. A compositionally biased stretch (low complexity) spans 251–267; the sequence is NGPQDPDNTDDNGPQDP. The segment at 351-386 is CTAR2; it reads GHGGGDPHLPTLLLGSSGSGGDDDDPHGPVQLSYYD.

Belongs to the herpesviridae LMP-1 family. Interacts (via PXQXT motif) with host tumor necrosis factor receptor-associated factor (TRAF) proteins TRAF1, TRAF2, TRAF3 and TRAF5. Interacts with human protein ZMYND11; leading to negatively regulate NF-kappa-B activation. Interacts with host UBE2I; this interaction induces the sumoylation of various cellular proteins. Interacts with host IRF7. Interacts with host TYK2. Ubiquitinated on the N-terminus.

The protein localises to the host cell membrane. In terms of biological role, acts as a CD40 functional homolog to prevent apoptosis of infected B-lymphocytes and drive their proliferation. Functions as a constitutively active tumor necrosis factor receptor that induces the activation of several signaling pathways, including those of the NF-kappa-B family. LMP1 signaling leads to up-regulation of antiapoptotic proteins and provide growth signals in latently infected cells. Interacts with host UBE2I and subsequently affects the sumoylation state of several cellular proteins. For example, induces the sumoylation of host IRF7 thereby limiting its transcriptional activity and modulating the activation of innate immune responses. Also inhibits host IFN-alpha-stimulated STAT2 nuclear translocation and interferon-stimulated response element transcriptional activity by interacting with and inhibiting host TYK2. Induces SUMO expression during viral latency thereby dysregulating the host sumoylation processes. The sequence is that of Latent membrane protein 1 (LMP1) from Epstein-Barr virus (strain B95-8) (HHV-4).